The primary structure comprises 256 residues: tRNA (guanine-N(1)-)-methyltransferase (256 aa).

S-adenosyl-L-methionine is bound by residues G117 and 137-142 (LGDFVL).

The protein belongs to the RNA methyltransferase TrmD family. In terms of assembly, homodimer.

The protein localises to the cytoplasm. It catalyses the reaction guanosine(37) in tRNA + S-adenosyl-L-methionine = N(1)-methylguanosine(37) in tRNA + S-adenosyl-L-homocysteine + H(+). In terms of biological role, specifically methylates guanosine-37 in various tRNAs. The sequence is that of tRNA (guanine-N(1)-)-methyltransferase from Methylibium petroleiphilum (strain ATCC BAA-1232 / LMG 22953 / PM1).